A 293-amino-acid chain; its full sequence is 4-hydroxybenzoate octaprenyltransferase (293 aa).

The next 8 helical transmembrane spans lie at 26 to 48, 98 to 118, 122 to 142, 145 to 165, 167 to 187, 218 to 238, 241 to 261, and 272 to 292; these read PIGT…GGMP, TEAK…DLLL, TFLL…MKRF, LPQV…YGAV, ESLP…TVAY, IIAL…WISQ, WGYF…CWLT, and AFLN…VGIY.

Belongs to the UbiA prenyltransferase family. The cofactor is Mg(2+).

The protein resides in the cell inner membrane. It carries out the reaction all-trans-octaprenyl diphosphate + 4-hydroxybenzoate = 4-hydroxy-3-(all-trans-octaprenyl)benzoate + diphosphate. Its pathway is cofactor biosynthesis; ubiquinone biosynthesis. Its function is as follows. Catalyzes the prenylation of para-hydroxybenzoate (PHB) with an all-trans polyprenyl group. Mediates the second step in the final reaction sequence of ubiquinone-8 (UQ-8) biosynthesis, which is the condensation of the polyisoprenoid side chain with PHB, generating the first membrane-bound Q intermediate 3-octaprenyl-4-hydroxybenzoate. The protein is 4-hydroxybenzoate octaprenyltransferase of Actinobacillus pleuropneumoniae serotype 3 (strain JL03).